We begin with the raw amino-acid sequence, 624 residues long: Chaperone protein HtpG (624 aa).

Residues 1-336 (MKGQETRGFQ…SSDLPLNVSR (336 aa)) are a; substrate-binding. The segment at 337 to 552 (EILQDSTVTR…ADEMSTQMAK (216 aa)) is b. The c stretch occupies residues 553-624 (LFAAAGQKVP…IRRMNQLLVS (72 aa)).

Belongs to the heat shock protein 90 family. In terms of assembly, homodimer.

The protein localises to the cytoplasm. Functionally, molecular chaperone. Has ATPase activity. The polypeptide is Chaperone protein HtpG (Shigella boydii serotype 4 (strain Sb227)).